The sequence spans 257 residues: Histidine/lysine/arginine/ornithine transport ATP-binding protein HisP (257 aa).

One can recognise an ABC transporter domain in the interval 6–252 (LNVIDLHKRY…PQSPRLQRFL (247 aa)). ATP contacts are provided by serine 40, glycine 41, glycine 43, lysine 44, serine 45, and threonine 46.

Belongs to the ABC transporter superfamily. In terms of assembly, the HisPMQJ complex is composed of two ATP-binding proteins (HisP), two transmembrane proteins (HisM and HisQ) and a solute-binding protein (HisJ). The HisPMQ-ArgT complex is composed of two ATP-binding proteins (HisP), two transmembrane proteins (HisM and HisQ) and a solute-binding protein (ArgT).

The protein resides in the cell inner membrane. It catalyses the reaction a polar amino acid(out) + ATP + H2O = a polar amino acid(in) + ADP + phosphate + H(+). The catalysed reaction is L-histidine(out) + ATP + H2O = L-histidine(in) + ADP + phosphate + H(+). The enzyme catalyses L-lysine(out) + ATP + H2O = L-lysine(in) + ADP + phosphate + H(+). It carries out the reaction L-arginine(out) + ATP + H2O = L-arginine(in) + ADP + phosphate + H(+). It catalyses the reaction L-ornithine(out) + ATP + H2O = L-ornithine(in) + ADP + phosphate + H(+). In terms of biological role, part of the ABC transporter complex HisPMQJ involved in histidine transport. Is also part of the ABC transporter complex HisPMQ-ArgT involved in lysine/arginine/ornithine transport. Shows ATPase activity. Responsible for energy coupling to the transport system. This Escherichia coli (strain K12) protein is Histidine/lysine/arginine/ornithine transport ATP-binding protein HisP.